We begin with the raw amino-acid sequence, 206 residues long: Large ribosomal subunit protein uL4 (206 aa).

This sequence belongs to the universal ribosomal protein uL4 family. Part of the 50S ribosomal subunit.

One of the primary rRNA binding proteins, this protein initially binds near the 5'-end of the 23S rRNA. It is important during the early stages of 50S assembly. It makes multiple contacts with different domains of the 23S rRNA in the assembled 50S subunit and ribosome. Its function is as follows. Forms part of the polypeptide exit tunnel. The protein is Large ribosomal subunit protein uL4 of Afipia carboxidovorans (strain ATCC 49405 / DSM 1227 / KCTC 32145 / OM5) (Oligotropha carboxidovorans).